The chain runs to 429 residues: D-amino acid dehydrogenase (429 aa).

3–17 serves as a coordination point for FAD; that stretch reads VLILGSGVIGVTSAW.

Belongs to the DadA oxidoreductase family. It depends on FAD as a cofactor.

The enzyme catalyses a D-alpha-amino acid + A + H2O = a 2-oxocarboxylate + AH2 + NH4(+). Its pathway is amino-acid degradation; D-alanine degradation; NH(3) and pyruvate from D-alanine: step 1/1. Functionally, oxidative deamination of D-amino acids. The protein is D-amino acid dehydrogenase of Xanthomonas euvesicatoria pv. vesicatoria (strain 85-10) (Xanthomonas campestris pv. vesicatoria).